We begin with the raw amino-acid sequence, 563 residues long: Chaperonin GroEL 1 (563 aa).

ATP is bound by residues 29 to 32 (TIGP), 86 to 90 (DGTTT), Gly413, 476 to 478 (NAA), and Asp492. A disordered region spans residues 520–545 (DKPEPPSPAGGEGGGDPMGGMGGMGG). The segment covering 529 to 545 (GGEGGGDPMGGMGGMGG) has biased composition (gly residues).

This sequence belongs to the chaperonin (HSP60) family. In terms of assembly, forms a cylinder of 14 subunits composed of two heptameric rings stacked back-to-back. Interacts with the co-chaperonin GroES.

Its subcellular location is the cytoplasm. The catalysed reaction is ATP + H2O + a folded polypeptide = ADP + phosphate + an unfolded polypeptide.. Together with its co-chaperonin GroES, plays an essential role in assisting protein folding. The GroEL-GroES system forms a nano-cage that allows encapsulation of the non-native substrate proteins and provides a physical environment optimized to promote and accelerate protein folding. The sequence is that of Chaperonin GroEL 1 from Prochlorococcus marinus (strain SARG / CCMP1375 / SS120).